Here is a 326-residue protein sequence, read N- to C-terminus: Isoaspartyl peptidase/L-asparaginase (326 aa).

Catalysis depends on Thr185, which acts as the Nucleophile. Residues 213–216 and 236–239 contribute to the substrate site; these read RVGD and TGHG.

The protein belongs to the Ntn-hydrolase family. In terms of assembly, heterodimer of an alpha and beta chain produced by autocleavage. This heterodimer may then dimerize in turn, giving rise to a heterotetramer. Post-translationally, cleaved into an alpha and beta chain by autocatalysis; this activates the enzyme. The N-terminal residue of the beta subunit is responsible for the nucleophile hydrolase activity. As to expression, high expression in the heart and brain while low to minimal expression in the other tissues. In ocular tissues, high levels is observed in the optic nerve and retina while relatively low levels of expression are detected in the iris-ciliary body, lens or retinal pigment epithelium.

Its subcellular location is the cytoplasm. The enzyme catalyses L-asparagine + H2O = L-aspartate + NH4(+). It catalyses the reaction Cleavage of a beta-linked Asp residue from the N-terminus of a polypeptide.. Has both L-asparaginase and beta-aspartyl peptidase activity. May be involved in the production of L-aspartate, which can act as an excitatory neurotransmitter in some brain regions. Is highly active with L-Asp beta-methyl ester. Besides, has catalytic activity toward beta-aspartyl dipeptides and their methyl esters, including beta-L-Asp-L-Phe, beta-L-Asp-L-Phe methyl ester (aspartame), beta-L-Asp-L-Ala, beta-L-Asp-L-Leu and beta-L-Asp-L-Lys. Does not have aspartylglucosaminidase activity and is inactive toward GlcNAc-L-Asn. Likewise, has no activity toward glutamine. This is Isoaspartyl peptidase/L-asparaginase (Asrgl1) from Mus musculus (Mouse).